Here is a 66-residue protein sequence, read N- to C-terminus: Protein I177L (66 aa).

The N-linked (GlcNAc...) asparagine; by host glycan is linked to asparagine 11.

This sequence belongs to the asfivirus I177L family.

The protein localises to the virion. The polypeptide is Protein I177L (Ornithodoros (relapsing fever ticks)).